Here is a 128-residue protein sequence, read N- to C-terminus: UPF0102 protein GSU0650 (128 aa).

This sequence belongs to the UPF0102 family.

This Geobacter sulfurreducens (strain ATCC 51573 / DSM 12127 / PCA) protein is UPF0102 protein GSU0650.